Consider the following 137-residue polypeptide: MGWLRPGPRPLCPPARASWAFSHRFPSPLAPRRSPTPFFMASLLCCGPKLAACGIVLSAWGVIMLIMLGIFFNVHSAVLIEDVPFTEKDFENGPQNIYNLYEQVSYNCFIAAGLYLLLGGFSFCQVRLNKRKEYMVR.

The next 2 membrane-spanning stretches (helical) occupy residues 52–72 (ACGI…GIFF) and 104–124 (VSYN…FSFC).

It belongs to the RNase K family. In terms of assembly, interacts with the proton translocation complex V0 of the V-ATPase. Interacts with ATP6AP1. As to expression, widely expressed.

The protein localises to the endomembrane system. The protein resides in the cytoplasmic vesicle. Its subcellular location is the clathrin-coated vesicle membrane. In terms of biological role, endoribonuclease which preferentially cleaves ApU and ApG phosphodiester bonds. Hydrolyzes UpU bonds at a lower rate. Regulates the activity of vacuolar (H+)-ATPase (V-ATPase) which is responsible for acidifying and maintaining the pH of intracellular compartments. Required at an early stage of receptor-mediated endocytosis. Functionally, (Microbial infection) Required at an early stage of both clathrin-mediated and clathrin-independent endocytic uptake of a diverse set of viruses, including dengue, West Nile, Sindbis, Rift Valley Fever, influenza, and human rhinoviruses. In Homo sapiens (Human), this protein is Ribonuclease kappa (RNASEK).